Reading from the N-terminus, the 129-residue chain is Putative CC-type chemokine FPV061 (129 aa).

Belongs to the intercrine beta (chemokine CC) family. Highly divergent.

The polypeptide is Putative CC-type chemokine FPV061 (Fowlpox virus (strain NVSL) (FPV)).